The primary structure comprises 220 residues: Deoxyribose-phosphate aldolase (220 aa).

The Proton donor/acceptor role is filled by Asp89. Lys151 serves as the catalytic Schiff-base intermediate with acetaldehyde. Lys180 acts as the Proton donor/acceptor in catalysis.

Belongs to the DeoC/FbaB aldolase family. DeoC type 1 subfamily.

The protein resides in the cytoplasm. The enzyme catalyses 2-deoxy-D-ribose 5-phosphate = D-glyceraldehyde 3-phosphate + acetaldehyde. It functions in the pathway carbohydrate degradation; 2-deoxy-D-ribose 1-phosphate degradation; D-glyceraldehyde 3-phosphate and acetaldehyde from 2-deoxy-alpha-D-ribose 1-phosphate: step 2/2. Catalyzes a reversible aldol reaction between acetaldehyde and D-glyceraldehyde 3-phosphate to generate 2-deoxy-D-ribose 5-phosphate. This Lactococcus lactis subsp. lactis (strain IL1403) (Streptococcus lactis) protein is Deoxyribose-phosphate aldolase.